The chain runs to 312 residues: Adenylyl-sulfate kinase, chloroplastic (312 aa).

An ATP-binding site is contributed by Gly-142 to Ser-149. Catalysis depends on Ser-216, which acts as the Phosphoserine intermediate.

The protein belongs to the APS kinase family.

It localises to the plastid. Its subcellular location is the chloroplast. The enzyme catalyses adenosine 5'-phosphosulfate + ATP = 3'-phosphoadenylyl sulfate + ADP + H(+). The protein operates within sulfur metabolism; hydrogen sulfide biosynthesis; sulfite from sulfate: step 2/3. Catalyzes the synthesis of activated sulfate. The chain is Adenylyl-sulfate kinase, chloroplastic (AKN) from Catharanthus roseus (Madagascar periwinkle).